Consider the following 436-residue polypeptide: Anaerobic glycerol-3-phosphate dehydrogenase subunit B (436 aa).

The protein belongs to the anaerobic G-3-P dehydrogenase subunit B family. In terms of assembly, composed of a catalytic GlpA/B dimer and of membrane bound GlpC. It depends on FMN as a cofactor.

The catalysed reaction is a quinone + sn-glycerol 3-phosphate = dihydroxyacetone phosphate + a quinol. The protein operates within polyol metabolism; glycerol degradation via glycerol kinase pathway; glycerone phosphate from sn-glycerol 3-phosphate (anaerobic route): step 1/1. Conversion of glycerol 3-phosphate to dihydroxyacetone. Uses fumarate or nitrate as electron acceptor. This Vibrio cholerae serotype O1 (strain M66-2) protein is Anaerobic glycerol-3-phosphate dehydrogenase subunit B.